The chain runs to 27 residues: Weak neurotoxin E3 (27 aa).

In terms of tissue distribution, expressed by the venom gland.

It is found in the secreted. Its function is as follows. Binds to muscle nicotinic acetylcholine receptor (nAChR) and inhibit acetylcholine from binding to the receptor, thereby impairing neuromuscular transmission. This chain is Weak neurotoxin E3, found in Micrurus pyrrhocryptus (Coral snake).